The primary structure comprises 181 residues: Nedd8-conjugating enzyme UbcE2M (181 aa).

Interaction with Uba3 regions lie at residues 4 to 7 (LFTL) and 24 to 54 (ASAA…PNDL). A UBC core domain is found at 26 to 170 (AAQLRIQKDI…VKKAMRGGCV (145 aa)). Cys108 acts as the Glycyl thioester intermediate in catalysis.

The protein belongs to the ubiquitin-conjugating enzyme family. UBC12 subfamily. Interacts with Uba3. In terms of tissue distribution, expressed in the wing disk.

It catalyses the reaction [E1 NEDD8-activating enzyme]-S-[NEDD8 protein]-yl-L-cysteine + [E2 NEDD8-conjugating enzyme]-L-cysteine = [E1 NEDD8-activating enzyme]-L-cysteine + [E2 NEDD8-conjugating enzyme]-S-[NEDD8-protein]-yl-L-cysteine.. The protein operates within protein modification; protein neddylation. In terms of biological role, accepts the ubiquitin-like protein Nedd8 from the Uba3-APP-BP1 E1 complex and catalyzes its covalent attachment to other proteins. Required for Cul1 and Cul3 neddylation. Negatively regulates full-length ci stability and hedgehog signaling. In Drosophila melanogaster (Fruit fly), this protein is Nedd8-conjugating enzyme UbcE2M.